Consider the following 242-residue polypeptide: DNA repair protein RecO (242 aa).

Belongs to the RecO family.

In terms of biological role, involved in DNA repair and RecF pathway recombination. This is DNA repair protein RecO from Bacteroides fragilis (strain ATCC 25285 / DSM 2151 / CCUG 4856 / JCM 11019 / LMG 10263 / NCTC 9343 / Onslow / VPI 2553 / EN-2).